The sequence spans 226 residues: UPF0319 protein SO_1816 (226 aa).

The signal sequence occupies residues 1 to 21 (MKSLLPISSLLVLLGSASVSA).

The protein belongs to the UPF0319 family.

The polypeptide is UPF0319 protein SO_1816 (Shewanella oneidensis (strain ATCC 700550 / JCM 31522 / CIP 106686 / LMG 19005 / NCIMB 14063 / MR-1)).